We begin with the raw amino-acid sequence, 278 residues long: D-arabinitol 2-dehydrogenase [ribulose-forming] (278 aa).

Leu-28 and Asn-49 together coordinate NADP(+). Catalysis depends on Ser-166, which acts as the Proton donor. Tyr-181, Lys-185, Ile-214, and Thr-216 together coordinate NADP(+). Tyr-181 acts as the Proton acceptor in catalysis. The active-site Lowers pKa of active site Tyr is Lys-185.

The protein belongs to the short-chain dehydrogenases/reductases (SDR) family.

It catalyses the reaction D-arabinitol + NAD(+) = D-ribulose + NADH + H(+). It functions in the pathway carbohydrate metabolism; D-arabinitol metabolism. In Scheffersomyces stipitis (strain ATCC 58785 / CBS 6054 / NBRC 10063 / NRRL Y-11545) (Yeast), this protein is D-arabinitol 2-dehydrogenase [ribulose-forming] (ARDH).